Consider the following 792-residue polypeptide: Chloride channel protein CLC-d (792 aa).

12 helical membrane passes run 78 to 98, 119 to 139, 170 to 190, 195 to 215, 237 to 257, 267 to 287, 320 to 340, 361 to 381, 451 to 471, 474 to 494, 508 to 528, and 529 to 549; these read FFSL…NLSV, AGFI…AYII, RTLI…LALG, LVHT…TKYH, GCAA…LFAL, QLMW…RTAM, LLPM…FNQL, IIEA…LPLL, LLTF…TAVP, QFVP…MFVV, ALLG…SLCV, and IMVE…VLLI. 2 consecutive CBS domains span residues 592–652 and 704–761; these read QSQK…KVDF and LNPS…SSAV. A helical transmembrane segment spans residues 731-751; that stretch reads HLFVVPRPSRVIGLITRKDLL.

It belongs to the chloride channel (TC 2.A.49) family. Homodimer. Broadly expressed in the plant, but predominantly in the silique.

It localises to the membrane. Its function is as follows. Voltage-gated chloride channel. The sequence is that of Chloride channel protein CLC-d (CLC-D) from Arabidopsis thaliana (Mouse-ear cress).